The primary structure comprises 129 residues: Small ribosomal subunit protein uS11 (129 aa).

It belongs to the universal ribosomal protein uS11 family. Part of the 30S ribosomal subunit. Interacts with proteins S7 and S18. Binds to IF-3.

Functionally, located on the platform of the 30S subunit, it bridges several disparate RNA helices of the 16S rRNA. Forms part of the Shine-Dalgarno cleft in the 70S ribosome. The polypeptide is Small ribosomal subunit protein uS11 (Aeromonas hydrophila subsp. hydrophila (strain ATCC 7966 / DSM 30187 / BCRC 13018 / CCUG 14551 / JCM 1027 / KCTC 2358 / NCIMB 9240 / NCTC 8049)).